Here is a 314-residue protein sequence, read N- to C-terminus: Fumarylacetoacetate hydrolase domain-containing protein 2 (314 aa).

Positions 159, 161, and 190 each coordinate a divalent metal cation. N6-acetyllysine; alternate is present on lysine 203. Lysine 203 bears the N6-succinyllysine; alternate mark. At lysine 234 the chain carries N6-acetyllysine.

Belongs to the FAH family. Ca(2+) is required as a cofactor. The cofactor is Mg(2+).

Functionally, may have hydrolase activity. This chain is Fumarylacetoacetate hydrolase domain-containing protein 2 (FAHD2), found in Pongo abelii (Sumatran orangutan).